A 291-amino-acid polypeptide reads, in one-letter code: uncharacterized protein (291 aa).

Disordered stretches follow at residues Ser-29–Ser-50 and Arg-168–Lys-291. Ser-50 is modified (phosphoserine). Composition is skewed to polar residues over residues Asn-176 to Pro-186 and Gln-205 to Ile-217. Over residues Tyr-221 to Thr-237 the composition is skewed to basic and acidic residues. The span at Ser-280–Lys-291 shows a compositional bias: polar residues.

This is an uncharacterized protein from Mus musculus (Mouse).